The sequence spans 771 residues: Receptor like protein 22 (771 aa).

The signal sequence occupies residues 1–20 (MSNLRLRLLSLVSILYCIAA). Residues 21–729 (LRCRPDQTET…EEEEILEWRA (709 aa)) lie on the Extracellular side of the membrane. N-linked (GlcNAc...) asparagine glycosylation is found at N46, N58, N80, N93, N134, and N158. LRR repeat units follow at residues 86-110 (LSHL…AFGQ), 112-135 (NNLE…IRNL), 136-159 (TKLT…VQNL), 160-183 (TKLL…FFTM), 185-206 (FLSY…SNSS), 207-230 (SKLE…VLRL), 232-254 (NLRY…IFSP), 255-281 (LQSL…DFPK), 283-303 (MEIL…LKSL), 304-327 (KKLW…IWSL), 329-350 (LLVS…LDHV), and 353-377 (NSSV…PVSI). Residue N204 is glycosylated (N-linked (GlcNAc...) asparagine). N-linked (GlcNAc...) asparagine glycosylation occurs at N242. N292 carries an N-linked (GlcNAc...) asparagine glycan. N-linked (GlcNAc...) asparagine glycans are attached at residues N337, N344, N353, N379, N384, N397, N410, N421, N466, and N481. The stretch at 378 to 397 (INLSAWNNSFTGDIPLSVCN) is one LRR 13; degenerate repeat. LRR repeat units follow at residues 398–419 (RTSL…PPCM), 420–443 (GNFT…FYSG), 445–467 (LTQT…LLNC), 469–491 (FIRF…LKAL), 492–516 (PNLK…DQSS), 519–543 (FPKL…YFAN), 588–612 (LTFY…IGLL), 613–636 (KTLI…FANV), 637–660 (TELE…LGRL), and 662–685 (YLAY…QIIG). N543 carries N-linked (GlcNAc...) asparagine glycosylation. Residues N619, N622, and N635 are each glycosylated (N-linked (GlcNAc...) asparagine). The helical transmembrane segment at 730 to 750 (AAIGYGPGVLFGLAIGHVVAL) threads the bilayer. Topologically, residues 751–771 (YKPGWFIKNNGQNRLRGIRHP) are cytoplasmic.

It belongs to the RLP family.

Its subcellular location is the cell membrane. This Arabidopsis thaliana (Mouse-ear cress) protein is Receptor like protein 22.